A 623-amino-acid polypeptide reads, in one-letter code: Glutamine--fructose-6-phosphate aminotransferase [isomerizing] (623 aa).

The active-site Nucleophile; for GATase activity is the Cys-2. Residues 2–228 enclose the Glutamine amidotransferase type-2 domain; sequence CGIVGYIGQA…NDQVVTITAD (227 aa). 2 consecutive SIS domains span residues 295–435 and 468–613; these read IDES…LRGN and LGRS…VDQP. Lys-618 acts as the For Fru-6P isomerization activity in catalysis.

As to quaternary structure, homodimer.

The protein localises to the cytoplasm. The catalysed reaction is D-fructose 6-phosphate + L-glutamine = D-glucosamine 6-phosphate + L-glutamate. Functionally, catalyzes the first step in hexosamine metabolism, converting fructose-6P into glucosamine-6P using glutamine as a nitrogen source. This chain is Glutamine--fructose-6-phosphate aminotransferase [isomerizing], found in Corynebacterium efficiens (strain DSM 44549 / YS-314 / AJ 12310 / JCM 11189 / NBRC 100395).